The sequence spans 338 residues: Ornithine carbamoyltransferase, catabolic (338 aa).

Carbamoyl phosphate is bound by residues 58-61 (STRT), glutamine 85, arginine 109, and 136-139 (HPTQ). Residues asparagine 168, aspartate 232, and 236-237 (SM) each bind L-ornithine. Carbamoyl phosphate-binding positions include 273–274 (CL) and arginine 318.

Belongs to the aspartate/ornithine carbamoyltransferase superfamily. OTCase family.

Its subcellular location is the cytoplasm. It catalyses the reaction carbamoyl phosphate + L-ornithine = L-citrulline + phosphate + H(+). It participates in amino-acid degradation; L-arginine degradation via ADI pathway; carbamoyl phosphate from L-arginine: step 2/2. In terms of biological role, reversibly catalyzes the transfer of the carbamoyl group from carbamoyl phosphate (CP) to the N(epsilon) atom of ornithine (ORN) to produce L-citrulline. This Streptococcus gordonii (strain Challis / ATCC 35105 / BCRC 15272 / CH1 / DL1 / V288) protein is Ornithine carbamoyltransferase, catabolic.